Consider the following 315-residue polypeptide: Prephenate dehydratase (315 aa).

A Prephenate dehydratase domain is found at 3 to 190 (RIAYLGPQGT…ARTRFVLVGR (188 aa)). The ACT domain occupies 204–281 (SVALRLPNTP…EDVRYLGSWP (78 aa)).

In terms of assembly, homodimer.

It carries out the reaction prephenate + H(+) = 3-phenylpyruvate + CO2 + H2O. Its pathway is amino-acid biosynthesis; L-phenylalanine biosynthesis; phenylpyruvate from prephenate: step 1/1. This chain is Prephenate dehydratase (pheA), found in Mycobacterium sp. (strain KMS).